The chain runs to 132 residues: Protein LH2 (132 aa).

The chain is Protein LH2 from Pantherophis guttatus (Corn snake).